A 432-amino-acid chain; its full sequence is Gamma-glutamyl phosphate reductase (432 aa).

This sequence belongs to the gamma-glutamyl phosphate reductase family.

It is found in the cytoplasm. The enzyme catalyses L-glutamate 5-semialdehyde + phosphate + NADP(+) = L-glutamyl 5-phosphate + NADPH + H(+). Its pathway is amino-acid biosynthesis; L-proline biosynthesis; L-glutamate 5-semialdehyde from L-glutamate: step 2/2. Functionally, catalyzes the NADPH-dependent reduction of L-glutamate 5-phosphate into L-glutamate 5-semialdehyde and phosphate. The product spontaneously undergoes cyclization to form 1-pyrroline-5-carboxylate. The chain is Gamma-glutamyl phosphate reductase from Methylorubrum extorquens (strain PA1) (Methylobacterium extorquens).